Reading from the N-terminus, the 255-residue chain is Fe(3+) dicitrate transport ATP-binding protein FecE (255 aa).

Positions 3–238 constitute an ABC transporter domain; the sequence is LRTENLTVSY…GLLRTVFSVE (236 aa). 35–42 contacts ATP; sequence GPNGCGKS.

Belongs to the ABC transporter superfamily. In terms of assembly, the complex is composed of two ATP-binding proteins (FecE), two transmembrane proteins (FecC and FecD) and a solute-binding protein (FecB).

It localises to the cell inner membrane. The enzyme catalyses iron(III) dicitrate(out) + ATP + H2O = iron(III) dicitrate(in) + ADP + phosphate + H(+). In terms of biological role, part of the ABC transporter complex FecBCDE involved in citrate-dependent Fe(3+) uptake. Binds ATP. Probably responsible for energy coupling to the transport system. This is Fe(3+) dicitrate transport ATP-binding protein FecE from Escherichia coli (strain K12).